The primary structure comprises 376 residues: Glucose-1-phosphate adenylyltransferase (376 aa).

Alpha-D-glucose 1-phosphate is bound by residues tyrosine 101, glycine 166, 181-182, and serine 192; that span reads EK.

Belongs to the bacterial/plant glucose-1-phosphate adenylyltransferase family. As to quaternary structure, homotetramer.

The catalysed reaction is alpha-D-glucose 1-phosphate + ATP + H(+) = ADP-alpha-D-glucose + diphosphate. Its pathway is glycan biosynthesis; glycogen biosynthesis. In terms of biological role, involved in the biosynthesis of ADP-glucose, a building block required for the elongation reactions to produce glycogen. Catalyzes the reaction between ATP and alpha-D-glucose 1-phosphate (G1P) to produce pyrophosphate and ADP-Glc. This chain is Glucose-1-phosphate adenylyltransferase, found in Bacillus mycoides (strain KBAB4) (Bacillus weihenstephanensis).